The sequence spans 290 residues: ATP synthase gamma chain (290 aa).

The protein belongs to the ATPase gamma chain family. As to quaternary structure, F-type ATPases have 2 components, CF(1) - the catalytic core - and CF(0) - the membrane proton channel. CF(1) has five subunits: alpha(3), beta(3), gamma(1), delta(1), epsilon(1). CF(0) has three main subunits: a, b and c.

It is found in the cell membrane. Its function is as follows. Produces ATP from ADP in the presence of a proton gradient across the membrane. The gamma chain is believed to be important in regulating ATPase activity and the flow of protons through the CF(0) complex. The sequence is that of ATP synthase gamma chain from Roseiflexus castenholzii (strain DSM 13941 / HLO8).